A 333-amino-acid chain; its full sequence is Adenosine deaminase (333 aa).

Zn(2+)-binding residues include His-12 and His-14. 2 residues coordinate substrate: His-14 and Asp-16. Pentostatin contacts are provided by residues 14 to 16, Ser-141, and Gly-170; that span reads HLD. Gly-170 provides a ligand contact to substrate. His-197 is a Zn(2+) binding site. Positions 200, 221, and 278 each coordinate pentostatin. Glu-200 serves as the catalytic Proton donor. A Zn(2+)-binding site is contributed by Asp-278. Asp-279 provides a ligand contact to substrate.

This sequence belongs to the metallo-dependent hydrolases superfamily. Adenosine and AMP deaminases family. Adenosine deaminase subfamily. Requires Zn(2+) as cofactor.

The enzyme catalyses adenosine + H2O + H(+) = inosine + NH4(+). The catalysed reaction is 2'-deoxyadenosine + H2O + H(+) = 2'-deoxyinosine + NH4(+). Its function is as follows. Catalyzes the hydrolytic deamination of adenosine and 2-deoxyadenosine. This Salmonella typhimurium (strain LT2 / SGSC1412 / ATCC 700720) protein is Adenosine deaminase.